The sequence spans 239 residues: Ribosomal RNA small subunit methyltransferase G (239 aa).

S-adenosyl-L-methionine-binding positions include Gly-77, Phe-82, 128 to 129 (AE), and Arg-147.

Belongs to the methyltransferase superfamily. RNA methyltransferase RsmG family.

The protein resides in the cytoplasm. In terms of biological role, specifically methylates the N7 position of guanine in position 535 of 16S rRNA. The protein is Ribosomal RNA small subunit methyltransferase G of Bacillus cereus (strain AH187).